We begin with the raw amino-acid sequence, 699 residues long: UvrABC system protein C (699 aa).

Residues Met-1–Ala-51 are compositionally biased toward low complexity. The tract at residues Met-1–Val-59 is disordered. One can recognise a GIY-YIG domain in the interval Thr-92 to Val-170. The region spanning Arg-280–Ile-315 is the UVR domain.

It belongs to the UvrC family. Interacts with UvrB in an incision complex.

Its subcellular location is the cytoplasm. In terms of biological role, the UvrABC repair system catalyzes the recognition and processing of DNA lesions. UvrC both incises the 5' and 3' sides of the lesion. The N-terminal half is responsible for the 3' incision and the C-terminal half is responsible for the 5' incision. This chain is UvrABC system protein C, found in Rhodopseudomonas palustris (strain BisB18).